We begin with the raw amino-acid sequence, 135 residues long: Large ribosomal subunit protein bL21 (135 aa).

The segment covering 109–128 has biased composition (polar residues); it reads TLATAQSAPPSTSEATTDTT. The tract at residues 109 to 135 is disordered; it reads TLATAQSAPPSTSEATTDTTGIPAAEE.

Belongs to the bacterial ribosomal protein bL21 family. As to quaternary structure, part of the 50S ribosomal subunit. Contacts protein L20.

Functionally, this protein binds to 23S rRNA in the presence of protein L20. In Synechococcus sp. (strain JA-3-3Ab) (Cyanobacteria bacterium Yellowstone A-Prime), this protein is Large ribosomal subunit protein bL21.